The sequence spans 399 residues: Glutamyl-tRNA reductase (399 aa).

Residues 45–48 (TCNR), Ser101, 106–108 (EDQ), and Gln112 each bind substrate. The Nucleophile role is filled by Cys46. An NADP(+)-binding site is contributed by 177-182 (GFGKIG).

The protein belongs to the glutamyl-tRNA reductase family. As to quaternary structure, homodimer.

It catalyses the reaction (S)-4-amino-5-oxopentanoate + tRNA(Glu) + NADP(+) = L-glutamyl-tRNA(Glu) + NADPH + H(+). It participates in porphyrin-containing compound metabolism; protoporphyrin-IX biosynthesis; 5-aminolevulinate from L-glutamyl-tRNA(Glu): step 1/2. Catalyzes the NADPH-dependent reduction of glutamyl-tRNA(Glu) to glutamate 1-semialdehyde (GSA). This Clostridium kluyveri (strain ATCC 8527 / DSM 555 / NBRC 12016 / NCIMB 10680 / K1) protein is Glutamyl-tRNA reductase.